The chain runs to 272 residues: 4-diphosphocytidyl-2-C-methyl-D-erythritol kinase (272 aa).

The active site involves K14. 92–102 is a binding site for ATP; sequence PMGGGLGGGSS. D132 is an active-site residue.

Belongs to the GHMP kinase family. IspE subfamily.

The catalysed reaction is 4-CDP-2-C-methyl-D-erythritol + ATP = 4-CDP-2-C-methyl-D-erythritol 2-phosphate + ADP + H(+). The protein operates within isoprenoid biosynthesis; isopentenyl diphosphate biosynthesis via DXP pathway; isopentenyl diphosphate from 1-deoxy-D-xylulose 5-phosphate: step 3/6. Its function is as follows. Catalyzes the phosphorylation of the position 2 hydroxy group of 4-diphosphocytidyl-2C-methyl-D-erythritol. The sequence is that of 4-diphosphocytidyl-2-C-methyl-D-erythritol kinase from Fervidobacterium nodosum (strain ATCC 35602 / DSM 5306 / Rt17-B1).